The chain runs to 203 residues: MAWSITNKADTSSFTKMAEIRAHLKNSAENKDKNEDIFPEDVIIPSTKPKTKRATTPRKPAATKRSTKKEEVEEEVVIEEYHQTTEKNSPSPGVGDIVESVAAVELDDSDGDDEPMVQVEAGKVNHSARSDLSDLKVATDNIVKDLKKIITRISAVSTVLEDVQAAGISRQFTSMTKAITTLSDLVTEGKSKVVRKKVKTCKK.

Residues 25-36 (KNSAENKDKNED) show a composition bias toward basic and acidic residues. Disordered stretches follow at residues 25 to 74 (KNSA…EVEE) and 80 to 99 (EYHQ…DIVE). Over residues 49–67 (PKTKRATTPRKPAATKRST) the composition is skewed to basic residues. Threonine 84 and threonine 85 each carry phosphothreonine.

The protein belongs to the orthopoxvirus OPG110 family. In terms of assembly, interacts with the DNA polymerase processivity factor A20. Interacts with B1R kinase. Interacts with the late transcription factors VLTF-1 and VLTF-3. Interacts with the late transcription elongation factor G2. Interacts with itself. Might be part of a transcription complex composed at least of G2, A18, and H5. Phosphorylated at multiple sites. Phosphorylation is necessary for cleavage activity. Phosphorylated by the viral B1R and F10 kinases.

The protein localises to the virion. It localises to the host cytoplasm. In terms of biological role, involved in the co-transcriptional or post-transcriptional endoribonucleolytic cleavage that generates sequence-homogeneous 3' ends during late transcription. Involved in postreplicative transcription elongation on intermediate and late genes. Also involved in DNA replication and in multiple steps of virion morphogenesis. Required both for inclusion of virosoplasm into crescents as well as for maturation of immature virions (IV) into mature virions (MV). The chain is Late transcription elongation factor OPG110 (OPG110) from Homo sapiens (Human).